Reading from the N-terminus, the 463-residue chain is Probable Xaa-Pro aminopeptidase pepP (463 aa).

Residues D259, D270, E393, and E433 each coordinate Mn(2+).

This sequence belongs to the peptidase M24B family. Mn(2+) is required as a cofactor.

The catalysed reaction is Release of any N-terminal amino acid, including proline, that is linked to proline, even from a dipeptide or tripeptide.. In terms of biological role, catalyzes the removal of a penultimate prolyl residue from the N-termini of peptides. The chain is Probable Xaa-Pro aminopeptidase pepP (pepP) from Pyrenophora teres f. teres (strain 0-1) (Barley net blotch fungus).